The chain runs to 142 residues: Probable transport accessory protein MmpS1 (142 aa).

A run of 2 helical transmembrane segments spans residues 8 to 28 (FWIP…VSRL) and 81 to 101 (VVNA…AVVA).

The protein belongs to the MmpS family.

It is found in the cell membrane. This Mycobacterium bovis (strain ATCC BAA-935 / AF2122/97) protein is Probable transport accessory protein MmpS1 (mmpS1).